We begin with the raw amino-acid sequence, 76 residues long: Putative membrane protein insertion efficiency factor (76 aa).

It belongs to the UPF0161 family.

The protein localises to the cell inner membrane. Its function is as follows. Could be involved in insertion of integral membrane proteins into the membrane. This is Putative membrane protein insertion efficiency factor from Paraburkholderia phytofirmans (strain DSM 17436 / LMG 22146 / PsJN) (Burkholderia phytofirmans).